Here is an 822-residue protein sequence, read N- to C-terminus: Probable phosphoketolase (822 aa).

It belongs to the XFP family. It depends on thiamine diphosphate as a cofactor.

The chain is Probable phosphoketolase from Lactococcus lactis subsp. lactis (strain IL1403) (Streptococcus lactis).